The following is a 282-amino-acid chain: E3 ubiquitin-protein ligase SIAH1B (282 aa).

Residues 1 to 17 (MSRQAATALSTGTSKCP) show a composition bias toward polar residues. The tract at residues 1 to 23 (MSRQAATALSTGTSKCPPSQRVP) is disordered. S19 is subject to Phosphoserine; by ATM and ATR. An RING-type zinc finger spans residues 41-76 (CPVCFDYVLPPILQCQSGHLVCSNCRPKLTCCPTCR). The interval 90-282 (VANSVLFPCK…LGINVTISMC (193 aa)) is SBD. The SIAH-type zinc-finger motif lies at 93 to 153 (SVLFPCKYSA…VMPHLMHQHK (61 aa)). Zn(2+)-binding residues include C98, C105, H117, C121, C128, C135, H147, and H152.

This sequence belongs to the SINA (Seven in absentia) family. In terms of assembly, homodimer. In terms of processing, phosphorylated on Ser-19 by ATM and ATR. In terms of tissue distribution, widely expressed at low level in embryos and adults. Due to the high similarity between SIAH1A and SIAH1B, it is difficult to distinguish its own tissue specificity. Overexpressed in endothelial cells of adult lung.

The protein resides in the cytoplasm. It is found in the nucleus. It catalyses the reaction S-ubiquitinyl-[E2 ubiquitin-conjugating enzyme]-L-cysteine + [acceptor protein]-L-lysine = [E2 ubiquitin-conjugating enzyme]-L-cysteine + N(6)-ubiquitinyl-[acceptor protein]-L-lysine.. Its pathway is protein modification; protein ubiquitination. E3 ubiquitin-protein ligase that mediates ubiquitination and subsequent proteasomal degradation of target proteins. E3 ubiquitin ligases accept ubiquitin from an E2 ubiquitin-conjugating enzyme in the form of a thioester and then directly transfers the ubiquitin to targeted substrates. Mediates E3 ubiquitin ligase activity either through direct binding to substrates or by functioning as the essential RING domain subunit of larger E3 complexes. This is E3 ubiquitin-protein ligase SIAH1B (Siah1b) from Mus musculus (Mouse).